A 189-amino-acid polypeptide reads, in one-letter code: Large ribosomal subunit protein uL5 (189 aa).

It belongs to the universal ribosomal protein uL5 family. As to quaternary structure, part of the 50S ribosomal subunit; part of the 5S rRNA/L5/L18/L25 subcomplex. Contacts the 5S rRNA and the P site tRNA. Forms a bridge to the 30S subunit in the 70S ribosome.

Its function is as follows. This is one of the proteins that bind and probably mediate the attachment of the 5S RNA into the large ribosomal subunit, where it forms part of the central protuberance. In the 70S ribosome it contacts protein S13 of the 30S subunit (bridge B1b), connecting the 2 subunits; this bridge is implicated in subunit movement. Contacts the P site tRNA; the 5S rRNA and some of its associated proteins might help stabilize positioning of ribosome-bound tRNAs. This is Large ribosomal subunit protein uL5 from Kocuria rhizophila (strain ATCC 9341 / DSM 348 / NBRC 103217 / DC2201).